Consider the following 617-residue polypeptide: Urocanate reductase (617 aa).

FMN phosphoryl threonine is present on T70. The FAD site is built by A124, E143, N151, T152, G156, G157, and D387. R446 (proton donor) is an active-site residue. H553, E582, and L598 together coordinate FAD.

Belongs to the FAD-dependent oxidoreductase 2 family. FRD/SDH subfamily. FAD is required as a cofactor. It depends on FMN as a cofactor.

It carries out the reaction dihydrourocanate + A = urocanate + AH2. In terms of biological role, catalyzes the two-electron reduction of urocanate to dihydrourocanate (also named imidazole propionate or deamino-histidine). Dihydrourocanate is present at higher concentrations in subjects with type 2 diabetes, and directly impairs glucose tolerance and insulin signaling at the level of insulin receptor substrate (IRS) through activation of p38 gamma (MAPK12)-p62-mTORC1. Therefore, the UrdA enzyme from the gut bacteria L.fermentum strain NBRC 3956 may contribute to the pathogenesis of type 2 diabetes by producing the microbial metabolite dihydrourocanate. This chain is Urocanate reductase, found in Limosilactobacillus fermentum (strain NBRC 3956 / LMG 18251) (Lactobacillus fermentum).